The following is a 191-amino-acid chain: NAD(P)H dehydrogenase (quinone) (191 aa).

A Flavodoxin-like domain is found at 4 to 184 (ILVIFHSITG…VAKMLGKRVA (181 aa)). Residues 10 to 15 (SITGNT), 83 to 85 (TRF), and 118 to 124 (SNEMPHG) contribute to the FMN site.

Belongs to the WrbA family. As to quaternary structure, homodimer and homotetramer; in equilibrium. Requires FMN as cofactor.

It carries out the reaction a quinone + NADH + H(+) = a quinol + NAD(+). The enzyme catalyses a quinone + NADPH + H(+) = a quinol + NADP(+). Its function is as follows. It seems to function in response to environmental stress when various electron transfer chains are affected or when the environment is highly oxidizing. It reduces quinones to the hydroquinone state to prevent interaction of the semiquinone with O2 and production of superoxide. It prefers NADH over NADPH. In Archaeoglobus fulgidus (strain ATCC 49558 / DSM 4304 / JCM 9628 / NBRC 100126 / VC-16), this protein is NAD(P)H dehydrogenase (quinone).